We begin with the raw amino-acid sequence, 122 residues long: Basic phospholipase A2 vipoxin B chain (122 aa).

Disulfide bonds link Cys26–Cys115, Cys28–Cys44, Cys43–Cys95, Cys49–Cys122, Cys50–Cys88, Cys57–Cys81, and Cys75–Cys86. Residues Tyr27, Gly29, and Gly31 each contribute to the Ca(2+) site. Residue His47 is part of the active site. Asp48 contributes to the Ca(2+) binding site. The active site involves Asp89.

It belongs to the phospholipase A2 family. Group II subfamily. D49 sub-subfamily. In terms of assembly, heterodimer of A (AC P04084) and B chains; non-covalently linked. The A chain (acidic) is non-toxic, and increases the toxicity of the B chain (basic). The A chain may act as factor stabilizing the complex structure and hence retaining its toxicity by preventing non-specific binding. Upon binding to the target membranes the A chain is postulated to dissociate. Ca(2+) serves as cofactor. As to expression, expressed by the venom gland.

The protein localises to the secreted. It catalyses the reaction a 1,2-diacyl-sn-glycero-3-phosphocholine + H2O = a 1-acyl-sn-glycero-3-phosphocholine + a fatty acid + H(+). In terms of biological role, heterodimer: postsynaptic neurotoxin. Its function is as follows. Monomer: snake venom phospholipase A2 (PLA2) that shows hemolytic activity and inhibition of platelet aggregation. The hemolytic activity occurs only in presence of fatty acids (unsaturated fatty acids facilitate induce a strong hemolytic activity, whereas saturated fatty acids induce a slight activity). The inhibition of platelet aggregation is almost maximal when aggregation is induced by collagen, and arachidonic acid, whereas it is only of 30% when the aggregation is induced by ADP. PLA2 catalyzes the calcium-dependent hydrolysis of the 2-acyl groups in 3-sn-phosphoglycerides. This chain is Basic phospholipase A2 vipoxin B chain, found in Vipera ammodytes meridionalis (Eastern sand viper).